Consider the following 435-residue polypeptide: 3-phosphoshikimate 1-carboxyvinyltransferase (435 aa).

Lys22, Ser23, and Arg27 together coordinate 3-phosphoshikimate. Position 22 (Lys22) interacts with phosphoenolpyruvate. Gly95 and Arg123 together coordinate phosphoenolpyruvate. 4 residues coordinate 3-phosphoshikimate: Ser168, Gln170, Asp319, and Lys346. Gln170 is a phosphoenolpyruvate binding site. The active-site Proton acceptor is Asp319. Phosphoenolpyruvate contacts are provided by Arg350 and Arg393.

Belongs to the EPSP synthase family. As to quaternary structure, monomer.

Its subcellular location is the cytoplasm. The enzyme catalyses 3-phosphoshikimate + phosphoenolpyruvate = 5-O-(1-carboxyvinyl)-3-phosphoshikimate + phosphate. Its pathway is metabolic intermediate biosynthesis; chorismate biosynthesis; chorismate from D-erythrose 4-phosphate and phosphoenolpyruvate: step 6/7. Catalyzes the transfer of the enolpyruvyl moiety of phosphoenolpyruvate (PEP) to the 5-hydroxyl of shikimate-3-phosphate (S3P) to produce enolpyruvyl shikimate-3-phosphate and inorganic phosphate. This Chloroflexus aurantiacus (strain ATCC 29364 / DSM 637 / Y-400-fl) protein is 3-phosphoshikimate 1-carboxyvinyltransferase.